A 363-amino-acid polypeptide reads, in one-letter code: 3-dehydroquinate synthase (363 aa).

Residues 134-135 (TT), lysine 147, and lysine 156 contribute to the NAD(+) site. 3 residues coordinate Zn(2+): glutamate 189, histidine 254, and histidine 271.

This sequence belongs to the sugar phosphate cyclases superfamily. Dehydroquinate synthase family. The cofactor is Co(2+). Requires Zn(2+) as cofactor. NAD(+) is required as a cofactor.

The protein resides in the cytoplasm. The catalysed reaction is 7-phospho-2-dehydro-3-deoxy-D-arabino-heptonate = 3-dehydroquinate + phosphate. Its pathway is metabolic intermediate biosynthesis; chorismate biosynthesis; chorismate from D-erythrose 4-phosphate and phosphoenolpyruvate: step 2/7. Its function is as follows. Catalyzes the conversion of 3-deoxy-D-arabino-heptulosonate 7-phosphate (DAHP) to dehydroquinate (DHQ). The protein is 3-dehydroquinate synthase of Prochlorococcus marinus (strain MIT 9215).